The primary structure comprises 963 residues: Low-density lipoprotein receptor-related protein 8 (963 aa).

The signal sequence occupies residues 1–32; it reads MGLPEPGPLRLLALLLLLLLLLLLQLQHLAAA. Residues 42–826 lie on the Extracellular side of the membrane; the sequence is GPAKDCEKDQ…SKMGSTVTAA (785 aa). LDL-receptor class A domains are found at residues 46-82, 85-123, 126-164, 166-202, 205-246, 258-295, and 298-334; these read DCEK…DDCP, TCAD…ATCT, VCPA…AGCA, LCAP…RGCA, ACGP…ELCG, ACAT…ADCP, and TCRG…AGCL. Disulfide bonds link Cys47–Cys59, Cys54–Cys72, Cys66–Cys81, Cys86–Cys98, Cys93–Cys111, Cys105–Cys122, Cys127–Cys141, Cys134–Cys154, Cys148–Cys163, Cys167–Cys179, Cys174–Cys192, Cys186–Cys201, Cys206–Cys221, Cys213–Cys234, Cys228–Cys245, Cys259–Cys272, Cys267–Cys285, Cys279–Cys294, Cys299–Cys311, Cys306–Cys324, Cys318–Cys333, Cys340–Cys351, Cys347–Cys360, Cys362–Cys374, Cys380–Cys390, Cys386–Cys399, and Cys401–Cys414. Ca(2+) contacts are provided by Trp64, Asp67, Asp69, Asp71, Asp77, and Glu78. N-linked (GlcNAc...) asparagine glycosylation occurs at Asn176. Residues 336–375 enclose the EGF-like 1 domain; the sequence is GLNECLHNNGGCSHICTDLKIGFECTCPAGFQLLDQKTCG. Positions 376 to 415 constitute an EGF-like 2; calcium-binding domain; the sequence is DIDECKDPDACSQICVNYKGYFKCECYPGYEMDLLTKNCK. A glycan (N-linked (GlcNAc...) asparagine) is linked at Asn441. LDL-receptor class B repeat units lie at residues 462–508, 509–551, 552–595, 596–639, and 640–681; these read NRIY…DWVH, KHIY…DPLR, GFMY…DLLS, QRLY…VFED, and KVFW…FHEL. N-linked (GlcNAc...) asparagine glycans are attached at residues Asn518 and Asn538. Residues 740–798 are clustered O-linked oligosaccharides; the sequence is STSTTTLASTMTRTVPATTRAPGTTVHRSTYQNHSTETPSLTAAVPSSVSVPRAPSISP. Positions 754 to 815 are disordered; it reads VPATTRAPGT…SNHSQHYANE (62 aa). A compositionally biased stretch (polar residues) spans 765–777; it reads VHRSTYQNHSTET. Residue Asn772 is glycosylated (N-linked (GlcNAc...) asparagine). Residues 778–799 are compositionally biased toward low complexity; the sequence is PSLTAAVPSSVSVPRAPSISPS. Residues 800 to 812 show a composition bias toward polar residues; it reads TLSPATSNHSQHY. A glycan (N-linked (GlcNAc...) asparagine) is linked at Asn807. Residues 827–847 traverse the membrane as a helical segment; it reads VIGIIVPIVVIALLCMSGYLI. The Cytoplasmic segment spans residues 848–963; the sequence is WRNWKRKNTK…ALSLEDDGLP (116 aa).

Belongs to the LDLR family. In terms of assembly, homooligomer. Interacts with VLDLR. Reelin associates with two or more receptor molecules. Interacts with DAB1 and JNK-interacting proteins. Interacts with SNX17. Interacts with PCSK9. Interacts with MDK; this interaction is calcium dependent. Interacts with CLU. As to quaternary structure, (Microbial infection) Interacts with Semliki Forest virus E2-E1 heterodimer; this interaction mediates viral entry to host cell. (Microbial infection) Interacts (via class A repeats) with Eastern equine encephalitis virus spike glycoprotein E2; this interaction mediates viral entry into host cell. O-glycosylated. Some alternatively spliced isoforms lack the O-linked sugar domain. Post-translationally, undergoes sequential, furin and gamma-secretase dependent, proteolytic processing, resulting in the extracellular release of the entire ligand-binding domain as a soluble polypeptide and in the intracellular domain (ICD) release into the cytoplasm. The gamma-secretase-dependent proteolytical processing occurs after the bulk of the extracellular domain has been shed, in a furin-dependent manner, in alternatively spliced isoforms carrying the furin cleavage site. Hypoglycosylation (mainly hypo-O-glycosylation) leads to increased extracellular cleavage, which in turn results in accelerating release of the intracellular domain (ICD) by the gamma-secretase. The resulting receptor fragment is able to inhibit Reelin signaling and in particular the Reelin-induced DAB1 phosphorylation. In terms of processing, tyrosine phosphorylated upon apoE binding. Ubiquitinated by MYLIP leading to degradation. Expressed mainly in brain and placenta. Also expressed in platelets and megakaryocytic cells. Not expressed in the liver.

It localises to the cell membrane. It is found in the secreted. Its function is as follows. Cell surface receptor for Reelin (RELN) and apolipoprotein E (apoE)-containing ligands. LRP8 participates in transmitting the extracellular Reelin signal to intracellular signaling processes, by binding to DAB1 on its cytoplasmic tail. Reelin acts via both the VLDL receptor (VLDLR) and LRP8 to regulate DAB1 tyrosine phosphorylation and microtubule function in neurons. LRP8 has higher affinity for Reelin than VLDLR. LRP8 is thus a key component of the Reelin pathway which governs neuronal layering of the forebrain during embryonic brain development. Binds the endoplasmic reticulum resident receptor-associated protein (RAP). Binds dimers of beta 2-glycoprotein I and may be involved in the suppression of platelet aggregation in the vasculature. Highly expressed in the initial segment of the epididymis, where it affects the functional expression of clusterin and phospholipid hydroperoxide glutathione peroxidase (PHGPx), two proteins required for sperm maturation. May also function as an endocytic receptor. Not required for endocytic uptake of SEPP1 in the kidney which is mediated by LRP2. Together with its ligand, apolipoprotein E (apoE), may indirectly play a role in the suppression of the innate immune response by controlling the survival of myeloid-derived suppressor cells. Functionally, (Microbial infection) Acts as a receptor for Semliki Forest virus. The chain is Low-density lipoprotein receptor-related protein 8 (LRP8) from Homo sapiens (Human).